A 404-amino-acid polypeptide reads, in one-letter code: Cysteine desulfurase IscS (404 aa).

Pyridoxal 5'-phosphate is bound by residues 75-76 (AT), Asn-155, Gln-183, and 203-205 (SGH). An N6-(pyridoxal phosphate)lysine modification is found at Lys-206. Thr-243 contacts pyridoxal 5'-phosphate. Residue Cys-328 is the Cysteine persulfide intermediate of the active site. A [2Fe-2S] cluster-binding site is contributed by Cys-328.

It belongs to the class-V pyridoxal-phosphate-dependent aminotransferase family. NifS/IscS subfamily. Homodimer. Forms a heterotetramer with IscU, interacts with other sulfur acceptors. It depends on pyridoxal 5'-phosphate as a cofactor.

Its subcellular location is the cytoplasm. It catalyses the reaction (sulfur carrier)-H + L-cysteine = (sulfur carrier)-SH + L-alanine. The protein operates within cofactor biosynthesis; iron-sulfur cluster biosynthesis. Its function is as follows. Master enzyme that delivers sulfur to a number of partners involved in Fe-S cluster assembly, tRNA modification or cofactor biosynthesis. Catalyzes the removal of elemental sulfur atoms from cysteine to produce alanine. Functions as a sulfur delivery protein for Fe-S cluster synthesis onto IscU, an Fe-S scaffold assembly protein, as well as other S acceptor proteins. This is Cysteine desulfurase IscS from Shewanella baltica (strain OS223).